We begin with the raw amino-acid sequence, 476 residues long: Bifunctional protein HldE (476 aa).

Positions 1-319 (MKPTLPNYDQ…EAIHGSQDSG (319 aa)) are ribokinase. Residue 195-198 (NMLE) participates in ATP binding. Residue Asp-264 is part of the active site. The interval 344-476 (MTNGCFDILH…IIEAIKGGRG (133 aa)) is cytidylyltransferase.

This sequence in the N-terminal section; belongs to the carbohydrate kinase PfkB family. It in the C-terminal section; belongs to the cytidylyltransferase family. In terms of assembly, homodimer.

It catalyses the reaction D-glycero-beta-D-manno-heptose 7-phosphate + ATP = D-glycero-beta-D-manno-heptose 1,7-bisphosphate + ADP + H(+). It carries out the reaction D-glycero-beta-D-manno-heptose 1-phosphate + ATP + H(+) = ADP-D-glycero-beta-D-manno-heptose + diphosphate. It functions in the pathway nucleotide-sugar biosynthesis; ADP-L-glycero-beta-D-manno-heptose biosynthesis; ADP-L-glycero-beta-D-manno-heptose from D-glycero-beta-D-manno-heptose 7-phosphate: step 1/4. Its pathway is nucleotide-sugar biosynthesis; ADP-L-glycero-beta-D-manno-heptose biosynthesis; ADP-L-glycero-beta-D-manno-heptose from D-glycero-beta-D-manno-heptose 7-phosphate: step 3/4. Its function is as follows. Catalyzes the phosphorylation of D-glycero-D-manno-heptose 7-phosphate at the C-1 position to selectively form D-glycero-beta-D-manno-heptose-1,7-bisphosphate. Catalyzes the ADP transfer from ATP to D-glycero-beta-D-manno-heptose 1-phosphate, yielding ADP-D-glycero-beta-D-manno-heptose. The protein is Bifunctional protein HldE of Aliivibrio fischeri (strain ATCC 700601 / ES114) (Vibrio fischeri).